Here is a 399-residue protein sequence, read N- to C-terminus: Tryptophan synthase beta chain (399 aa).

K90 bears the N6-(pyridoxal phosphate)lysine mark.

This sequence belongs to the TrpB family. In terms of assembly, tetramer of two alpha and two beta chains. Pyridoxal 5'-phosphate is required as a cofactor.

The enzyme catalyses (1S,2R)-1-C-(indol-3-yl)glycerol 3-phosphate + L-serine = D-glyceraldehyde 3-phosphate + L-tryptophan + H2O. It functions in the pathway amino-acid biosynthesis; L-tryptophan biosynthesis; L-tryptophan from chorismate: step 5/5. In terms of biological role, the beta subunit is responsible for the synthesis of L-tryptophan from indole and L-serine. This chain is Tryptophan synthase beta chain, found in Lactiplantibacillus plantarum (strain ATCC BAA-793 / NCIMB 8826 / WCFS1) (Lactobacillus plantarum).